We begin with the raw amino-acid sequence, 349 residues long: MISVGIVGGTGYTGVELLRILLRHPKAQVRVLTSRTEAGKPVADMFPNLRGHTDLQFSDLNIDALKECDVVFFATPHGVAMQHAKDLIAAGTKVIDLAADFRLQNLEQFEKWYGMEHACPDVLKDSVYGLTELNREKIKQAQVIGNPGCYPTTVQLGLAPLLKSAQALIETKNIIIDAKSGVSGAGRKASLGMIYSENADNFKAYGVAGHRHHPEIVEALENIAGKKDVFEGLLFVPHLVPMIRGMLSTIYVDLTEAGKQTALQALYENFYANEKFVDVMPANSSPETRSVRGANELRIALYKPQPNKLIILAAQDNLVKGASGQAVQNMNLMFGFNEDEGLQGIGLLP.

Cys149 is a catalytic residue.

This sequence belongs to the NAGSA dehydrogenase family. Type 1 subfamily.

It is found in the cytoplasm. It carries out the reaction N-acetyl-L-glutamate 5-semialdehyde + phosphate + NADP(+) = N-acetyl-L-glutamyl 5-phosphate + NADPH + H(+). It participates in amino-acid biosynthesis; L-arginine biosynthesis; N(2)-acetyl-L-ornithine from L-glutamate: step 3/4. Catalyzes the NADPH-dependent reduction of N-acetyl-5-glutamyl phosphate to yield N-acetyl-L-glutamate 5-semialdehyde. The chain is N-acetyl-gamma-glutamyl-phosphate reductase from Acinetobacter baumannii (strain AB307-0294).